Consider the following 284-residue polypeptide: D-tagatose-1,6-bisphosphate aldolase subunit GatY (284 aa).

Residue Asp-82 is the Proton donor of the active site. Positions 83 and 180 each coordinate Zn(2+). Gly-181 serves as a coordination point for dihydroxyacetone phosphate. His-208 contacts Zn(2+). Dihydroxyacetone phosphate-binding positions include 209 to 211 (GAS) and 230 to 233 (NVAT).

It belongs to the class II fructose-bisphosphate aldolase family. TagBP aldolase GatY subfamily. As to quaternary structure, forms a complex with GatZ. Requires Zn(2+) as cofactor.

The catalysed reaction is D-tagatofuranose 1,6-bisphosphate = D-glyceraldehyde 3-phosphate + dihydroxyacetone phosphate. It functions in the pathway carbohydrate metabolism; D-tagatose 6-phosphate degradation; D-glyceraldehyde 3-phosphate and glycerone phosphate from D-tagatose 6-phosphate: step 2/2. Functionally, catalytic subunit of the tagatose-1,6-bisphosphate aldolase GatYZ, which catalyzes the reversible aldol condensation of dihydroxyacetone phosphate (DHAP or glycerone-phosphate) with glyceraldehyde 3-phosphate (G3P) to produce tagatose 1,6-bisphosphate (TBP). Requires GatZ subunit for full activity and stability. Is involved in the catabolism of galactitol. The chain is D-tagatose-1,6-bisphosphate aldolase subunit GatY from Escherichia coli (strain K12 / MC4100 / BW2952).